A 450-amino-acid polypeptide reads, in one-letter code: MLATLASATSEDAVAALEAACAAQTSWARTAPRVRAEILRRAFDLVTARSEDFALLMTLEMGKPLAEARGEVAYGAEFLRWFSEETVRDYGRYLTTPEGKNKILVQHKPVGPCLLITPWNFPLAMATRKVAPAVAAGCTMVLKPAKLTPLTSQLFAQTMMEAGLPAGVLNVVSSSSASGISGPLLKDSRLRKVSFTGSTPVGKRLMSDASRHVLRTSMELGGNAPFVVFEDADLDKAVEGAMAAKMRNMGEACTAANRFLVQESVAQEFTRKFAAAMGALSTGRGTDPASQVGPLINNGARDDIHALVTAAVDAGAVAVTGGAPVDGPGYFYQPTVLADVPNNAAILGQEIFGPVAPVTTFTTEQDAIKLANASEYGLAAYLYSRDFNRLLRVAEQIEFGMVGFNAGIISNAAAPFGGVKQSGLGREGGSEGIAEYTTTQYIGIADPYEN.

Residue 119-120 participates in NADP(+) binding; it reads WN. Arginine 128 lines the substrate pocket. Residues 143 to 146 and 197 to 198 each bind NADP(+); these read KPAK and GS. Catalysis depends on glutamate 219, which acts as the Proton acceptor. Leucine 220 is an NADP(+) binding site. The substrate site is built by arginine 247 and cysteine 253. Cysteine 253 acts as the Nucleophile in catalysis. Glutamate 350 lines the NADP(+) pocket. A substrate-binding site is contributed by serine 410.

The protein belongs to the aldehyde dehydrogenase family. Homodimer.

The catalysed reaction is succinate semialdehyde + NAD(+) + H2O = succinate + NADH + 2 H(+). It catalyses the reaction succinate semialdehyde + NADP(+) + H2O = succinate + NADPH + 2 H(+). It participates in alkaloid degradation; nicotine degradation. In terms of biological role, catalyzes the NAD(P)(+)-dependent oxidation of succinate semialdehyde to succinate, which may enter the citric acid cycle. Is involved in the catabolism of 4-methylaminobutanoate produced from nicotine. Acts preferentially with NADP(+) as cosubstrate but can also use NAD(+). To a lesser extent, is active also towards butyraldehyde (8.5% of the activity observed with succinate semialdehyde) and propionaldehyde (1.6% of the activity observed with succinate semialdehyde) as substrates. This is Succinate-semialdehyde dehydrogenase (sad) from Paenarthrobacter nicotinovorans (Arthrobacter nicotinovorans).